The sequence spans 588 residues: Adenine deaminase (588 aa).

Belongs to the metallo-dependent hydrolases superfamily. Adenine deaminase family. As to quaternary structure, homodimer. Mn(2+) is required as a cofactor.

The catalysed reaction is adenine + H2O + H(+) = hypoxanthine + NH4(+). The chain is Adenine deaminase from Escherichia fergusonii (strain ATCC 35469 / DSM 13698 / CCUG 18766 / IAM 14443 / JCM 21226 / LMG 7866 / NBRC 102419 / NCTC 12128 / CDC 0568-73).